The chain runs to 314 residues: Methionyl-tRNA formyltransferase (314 aa).

Residue 113–116 coordinates (6S)-5,6,7,8-tetrahydrofolate; that stretch reads SLLP.

Belongs to the Fmt family.

It catalyses the reaction L-methionyl-tRNA(fMet) + (6R)-10-formyltetrahydrofolate = N-formyl-L-methionyl-tRNA(fMet) + (6S)-5,6,7,8-tetrahydrofolate + H(+). In terms of biological role, attaches a formyl group to the free amino group of methionyl-tRNA(fMet). The formyl group appears to play a dual role in the initiator identity of N-formylmethionyl-tRNA by promoting its recognition by IF2 and preventing the misappropriation of this tRNA by the elongation apparatus. This chain is Methionyl-tRNA formyltransferase, found in Pseudomonas syringae pv. syringae (strain B728a).